We begin with the raw amino-acid sequence, 309 residues long: Transcriptional regulator HilD (309 aa).

The region spanning 209–306 is the HTH araC/xylS-type domain; sequence ERVYNIISSS…KTTPSTFIKM (98 aa). DNA-binding regions (H-T-H motif) lie at residues 226 to 247 and 273 to 296; these read TDVA…AEEG and VNAV…KKYF.

The protein is Transcriptional regulator HilD (hilD) of Salmonella typhimurium (strain SL1344).